Here is a 714-residue protein sequence, read N- to C-terminus: Protein ESC8 (714 aa).

Disordered stretches follow at residues 598–674 (APTG…ELHN) and 694–714 (RQLQ…RKGL). Residues 610–624 (TSSQRRTTVHYSSDV) show a composition bias toward polar residues. Residues 628–650 (VSEESENEVDIDVSDDYDSEYLS) are compositionally biased toward acidic residues. Residues 654–674 (TLTRKGEDRTDKSFGKRELHN) are compositionally biased toward basic and acidic residues. Residues 704–714 (RSLRRNARKGL) show a composition bias toward basic residues.

As to quaternary structure, interacts with GAL11 and SIR2.

The protein localises to the cytoplasm. Its subcellular location is the nucleus. Its function is as follows. Involved in HMR and telomere silencing via the recruitment or stabilizing of the SIR (silent information regulators) complex. The protein is Protein ESC8 (ESC8) of Saccharomyces cerevisiae (strain ATCC 204508 / S288c) (Baker's yeast).